We begin with the raw amino-acid sequence, 273 residues long: Octanoyltransferase (273 aa).

Residues Asp-35–Glu-254 enclose the BPL/LPL catalytic domain. Substrate contacts are provided by residues Arg-73 to His-80, Ala-184 to Gly-186, and Gly-197 to Ala-199. Catalysis depends on Cys-215, which acts as the Acyl-thioester intermediate.

It belongs to the LipB family.

The protein resides in the cytoplasm. It carries out the reaction octanoyl-[ACP] + L-lysyl-[protein] = N(6)-octanoyl-L-lysyl-[protein] + holo-[ACP] + H(+). It participates in protein modification; protein lipoylation via endogenous pathway; protein N(6)-(lipoyl)lysine from octanoyl-[acyl-carrier-protein]: step 1/2. In terms of biological role, catalyzes the transfer of endogenously produced octanoic acid from octanoyl-acyl-carrier-protein onto the lipoyl domains of lipoate-dependent enzymes. Lipoyl-ACP can also act as a substrate although octanoyl-ACP is likely to be the physiological substrate. The sequence is that of Octanoyltransferase from Streptomyces griseus subsp. griseus (strain JCM 4626 / CBS 651.72 / NBRC 13350 / KCC S-0626 / ISP 5235).